Here is an 831-residue protein sequence, read N- to C-terminus: Probable glucan 1,3-beta-glucosidase D (831 aa).

Composition is skewed to basic and acidic residues over residues 1 to 24 (MPSH…YREV), 44 to 56 (RRDD…RSHE), 79 to 93 (RSHD…RSRA), 102 to 115 (SRRD…EYRR), 137 to 151 (RDGQ…DREA), and 198 to 213 (QRER…LESK). 2 disordered regions span residues 1-179 (MPSH…SGSH) and 192-241 (HYDE…GQSK). At 1 to 297 (MPSHSRSRDR…AQPPFWKRKK (297 aa)) the chain is on the cytoplasmic side. The chain crosses the membrane as a helical; Signal-anchor for type II membrane protein span at residues 298-318 (WWIVIGVLVVVLAIVIPVAVV). Topologically, residues 319–831 (MSKKHGHDDD…PSFGDLPEYY (513 aa)) are extracellular. Asn-376, Asn-381, Asn-393, Asn-410, Asn-442, Asn-546, and Asn-558 each carry an N-linked (GlcNAc...) asparagine glycan. The active-site Proton donor is Glu-597. 4 N-linked (GlcNAc...) asparagine glycosylation sites follow: Asn-610, Asn-636, Asn-669, and Asn-689. The Nucleophile role is filled by Glu-702.

Belongs to the glycosyl hydrolase 5 (cellulase A) family.

It localises to the cell membrane. The enzyme catalyses Successive hydrolysis of beta-D-glucose units from the non-reducing ends of (1-&gt;3)-beta-D-glucans, releasing alpha-glucose.. Functionally, glucosidase involved in the degradation of cellulosic biomass. Active on lichenan. The sequence is that of Probable glucan 1,3-beta-glucosidase D (exgD) from Aspergillus flavus (strain ATCC 200026 / FGSC A1120 / IAM 13836 / NRRL 3357 / JCM 12722 / SRRC 167).